A 629-amino-acid polypeptide reads, in one-letter code: tRNA uridine 5-carboxymethylaminomethyl modification enzyme MnmG (629 aa).

11-16 lines the FAD pocket; that stretch reads GGGHAG. NAD(+) is bound at residue 273-287; sequence GPRYCPSFEDKAVRF.

The protein belongs to the MnmG family. In terms of assembly, homodimer. Heterotetramer of two MnmE and two MnmG subunits. It depends on FAD as a cofactor.

The protein localises to the cytoplasm. Its function is as follows. NAD-binding protein involved in the addition of a carboxymethylaminomethyl (cmnm) group at the wobble position (U34) of certain tRNAs, forming tRNA-cmnm(5)s(2)U34. The sequence is that of tRNA uridine 5-carboxymethylaminomethyl modification enzyme MnmG from Mycoplasma mycoides subsp. mycoides SC (strain CCUG 32753 / NCTC 10114 / PG1).